A 432-amino-acid chain; its full sequence is Tryptophan--tRNA ligase (432 aa).

Residues 13 to 15 and 21 to 22 each bind ATP; these read TTS and GN. Positions 14–22 match the 'HIGH' region motif; the sequence is TSGTPHLGN. Position 146 (Asp-146) interacts with L-tryptophan. ATP contacts are provided by residues 158-160, Leu-198, and 205-209; these read GRD and KMSKS. The short motif at 205–209 is the 'KMSKS' region element; it reads KMSKS.

It belongs to the class-I aminoacyl-tRNA synthetase family. In terms of assembly, homodimer.

Its subcellular location is the cytoplasm. The catalysed reaction is tRNA(Trp) + L-tryptophan + ATP = L-tryptophyl-tRNA(Trp) + AMP + diphosphate + H(+). Functionally, catalyzes the attachment of tryptophan to tRNA(Trp). The sequence is that of Tryptophan--tRNA ligase from Xanthomonas axonopodis pv. citri (strain 306).